The primary structure comprises 243 residues: Ubiquinone/menaquinone biosynthesis C-methyltransferase UbiE (243 aa).

S-adenosyl-L-methionine-binding positions include T69, D90, and 116 to 117 (DA).

This sequence belongs to the class I-like SAM-binding methyltransferase superfamily. MenG/UbiE family.

The catalysed reaction is a 2-demethylmenaquinol + S-adenosyl-L-methionine = a menaquinol + S-adenosyl-L-homocysteine + H(+). It catalyses the reaction a 2-methoxy-6-(all-trans-polyprenyl)benzene-1,4-diol + S-adenosyl-L-methionine = a 5-methoxy-2-methyl-3-(all-trans-polyprenyl)benzene-1,4-diol + S-adenosyl-L-homocysteine + H(+). The protein operates within quinol/quinone metabolism; menaquinone biosynthesis; menaquinol from 1,4-dihydroxy-2-naphthoate: step 2/2. It functions in the pathway cofactor biosynthesis; ubiquinone biosynthesis. In terms of biological role, methyltransferase required for the conversion of demethylmenaquinol (DMKH2) to menaquinol (MKH2) and the conversion of 2-polyprenyl-6-methoxy-1,4-benzoquinol (DDMQH2) to 2-polyprenyl-3-methyl-6-methoxy-1,4-benzoquinol (DMQH2). This Ralstonia pickettii (strain 12J) protein is Ubiquinone/menaquinone biosynthesis C-methyltransferase UbiE.